The following is a 338-amino-acid chain: Arginine N-succinyltransferase subunit alpha (338 aa).

This sequence belongs to the succinylarginine dihydrolase family. In terms of assembly, heterotetramer of two alpha and two beta subunits.

The enzyme catalyses succinyl-CoA + L-arginine = N(2)-succinyl-L-arginine + CoA + H(+). It functions in the pathway amino-acid degradation; L-arginine degradation via AST pathway; L-glutamate and succinate from L-arginine: step 1/5. Its function is as follows. Catalyzes the transfer of succinyl-CoA to arginine to produce N(2)-succinylarginine. Also acts on L-ornithine. In Pseudomonas aeruginosa (strain ATCC 15692 / DSM 22644 / CIP 104116 / JCM 14847 / LMG 12228 / 1C / PRS 101 / PAO1), this protein is Arginine N-succinyltransferase subunit alpha (astA).